The chain runs to 415 residues: Serine--tRNA ligase (415 aa).

230–232 contributes to the L-serine binding site; sequence TAE. 261–263 contributes to the ATP binding site; that stretch reads RKE. Glutamate 284 lines the L-serine pocket. 348–351 contacts ATP; that stretch reads EISS. Residue serine 382 participates in L-serine binding.

It belongs to the class-II aminoacyl-tRNA synthetase family. Type-1 seryl-tRNA synthetase subfamily. Homodimer. The tRNA molecule binds across the dimer.

The protein resides in the cytoplasm. It carries out the reaction tRNA(Ser) + L-serine + ATP = L-seryl-tRNA(Ser) + AMP + diphosphate + H(+). It catalyses the reaction tRNA(Sec) + L-serine + ATP = L-seryl-tRNA(Sec) + AMP + diphosphate + H(+). It functions in the pathway aminoacyl-tRNA biosynthesis; selenocysteinyl-tRNA(Sec) biosynthesis; L-seryl-tRNA(Sec) from L-serine and tRNA(Sec): step 1/1. Functionally, catalyzes the attachment of serine to tRNA(Ser). Is also able to aminoacylate tRNA(Sec) with serine, to form the misacylated tRNA L-seryl-tRNA(Sec), which will be further converted into selenocysteinyl-tRNA(Sec). The chain is Serine--tRNA ligase from Sulfurimonas denitrificans (strain ATCC 33889 / DSM 1251) (Thiomicrospira denitrificans (strain ATCC 33889 / DSM 1251)).